Reading from the N-terminus, the 290-residue chain is uncharacterized protein (290 aa).

NAD(+) contacts are provided by residues A7–N21 and T100. Residue K175 is part of the active site. NAD(+) is bound at residue K243.

This sequence belongs to the HIBADH-related family.

This is an uncharacterized protein from Synechocystis sp. (strain ATCC 27184 / PCC 6803 / Kazusa).